The primary structure comprises 302 residues: UDP-N-acetylenolpyruvoylglucosamine reductase (302 aa).

The region spanning K31–R213 is the FAD-binding PCMH-type domain. R176 is an active-site residue. The active-site Proton donor is S226. The active site involves E296.

This sequence belongs to the MurB family. Requires FAD as cofactor.

The protein resides in the cytoplasm. The catalysed reaction is UDP-N-acetyl-alpha-D-muramate + NADP(+) = UDP-N-acetyl-3-O-(1-carboxyvinyl)-alpha-D-glucosamine + NADPH + H(+). The protein operates within cell wall biogenesis; peptidoglycan biosynthesis. Its function is as follows. Cell wall formation. The protein is UDP-N-acetylenolpyruvoylglucosamine reductase of Carboxydothermus hydrogenoformans (strain ATCC BAA-161 / DSM 6008 / Z-2901).